Consider the following 672-residue polypeptide: Synaptotagmin-like protein 4 (672 aa).

Positions 4–122 (ILDLSFLSEM…KATGDWFYDQ (119 aa)) constitute a RabBD domain. An FYVE-type zinc finger spans residues 63-105 (CARCQEGLGRLISKSNTCVGCNHLVCRECRVLESNGSWRCKVC). Residues 199 to 222 (SESLDSYTADSDSTSRRDSLDKSG) are disordered. Ser-201, Ser-204, Ser-217, Ser-221, and Ser-274 each carry phosphoserine. Residues 357-479 (VTGKIAFSLK…KLDKKLDHCL (123 aa)) form the C2 1 domain. At Ser-489 the chain carries Phosphoserine. In terms of domain architecture, C2 2 spans 508-634 (PASKLPVGGD…ISSGEVVDWM (127 aa)).

As to quaternary structure, part of a ternary complex containing STX1A and RAB27A. Can bind both dominant negative and dominant active mutants of RAB27A. Binds STXBP1, RAB3A, RAB8A and RAB27B. Interacts with MYO5A. As to expression, detected in insulin-secreting cell lines.

Its subcellular location is the membrane. It is found in the cytoplasmic vesicle. The protein localises to the secretory vesicle membrane. Modulates exocytosis of dense-core granules and secretion of hormones in the pancreas and the pituitary. Interacts with vesicles containing negatively charged phospholipids in a Ca(2+)-independent manner. The protein is Synaptotagmin-like protein 4 (Sytl4) of Rattus norvegicus (Rat).